We begin with the raw amino-acid sequence, 275 residues long: HUWE1-associated protein modifying stress responses 1 (275 aa).

Over residues 32–44 (AEQDEQLPPELQE) the composition is skewed to acidic residues. Positions 32-51 (AEQDEQLPPELQEEAAAAAQ) are disordered. Positions 80–152 (QQPGLSLWVP…LISFLCGKVP (73 aa)) are HUWE1-binding and HAPSTR1 oligomerization (HBO) domain. Disordered stretches follow at residues 155–181 (RNSR…SSVE), 204–227 (SVRS…RRRN), and 250–275 (GTRK…NRMI). Residue Ser167 is modified to Phosphoserine. The segment covering 172–181 (TSTETSSSVE) has biased composition (low complexity). Polar residues predominate over residues 204 to 216 (SVRSSTPGSPTHV). The residue at position 212 (Ser212) is a Phosphoserine.

It belongs to the HAPSTR1 family. As to quaternary structure, homooligomer. Heterooligomer with HAPSTR2; the interaction is direct and stabilizes HAPSTR1. Interacts with HUWE1. In terms of processing, ubiquitinated by HUWE1. Promotes HAPSTR1 degradation through polyubiquitination.

The protein resides in the nucleus. It localises to the cytoplasm. Its function is as follows. Acts as a central player within a network of stress response pathways promoting cellular adaptability. The E3 ligase HUWE1 assists HAPSTR1 in controlling stress signaling and in turn, HUWE1 feeds back to promote the degradation of HAPSTR1. HAPSTR1 represents a central coordination mechanism for stress response programs. Functions as a negative regulator of TP53/P53 in the cellular response to telomere erosion and probably also DNA damage. May attenuate p53/TP53 activation through the E3 ubiquitin ligase HUWE1. This is HUWE1-associated protein modifying stress responses 1 from Homo sapiens (Human).